The chain runs to 894 residues: CWF19-like protein 2 (894 aa).

The segment at methionine 1–glutamine 147 is disordered. Positions glutamate 13–aspartate 56 are enriched in basic and acidic residues. Residues glutamate 13–glutamate 107 adopt a coiled-coil conformation. Phosphoserine is present on serine 75. Over residues valine 76 to lysine 99 the composition is skewed to basic residues. Basic and acidic residues predominate over residues proline 128 to glutamine 147. Positions serine 166–aspartate 281 form a coiled coil. Lysine 171 participates in a covalent cross-link: Glycyl lysine isopeptide (Lys-Gly) (interchain with G-Cter in SUMO2). Residues glutamate 270–arginine 284 are compositionally biased toward basic and acidic residues. A disordered region spans residues glutamate 270 to glutamate 483. Residues threonine 320–glutamate 330 show a composition bias toward polar residues. Over residues phenylalanine 332–asparagine 352 the composition is skewed to basic and acidic residues. Phosphoserine is present on residues serine 360 and serine 372. Basic and acidic residues-rich tracts occupy residues lysine 410–histidine 430 and threonine 440–lysine 473. A phosphoserine mark is found at serine 479 and serine 484. Residues lysine 502 to threonine 530 adopt a coiled-coil conformation. The segment at asparagine 561–glutamate 583 is disordered. Lysine 604 participates in a covalent cross-link: Glycyl lysine isopeptide (Lys-Gly) (interchain with G-Cter in SUMO2). The stretch at alanine 644–cysteine 675 forms a coiled coil.

Belongs to the CWF19 family.

The protein is CWF19-like protein 2 (CWF19L2) of Homo sapiens (Human).